Reading from the N-terminus, the 294-residue chain is Coiled-coil domain-containing protein 69 (294 aa).

Residues 1 to 43 (MGCGHSRLSCCKPPKKRRQRPDQPPKPEPQELGPLNGDTATTD) are disordered. A lipid anchor (N-myristoyl glycine) is attached at G2. Over residues 20–29 (RPDQPPKPEP) the composition is skewed to basic and acidic residues. Residues 47-270 (ASEEAEQHQK…QEKEELLYRV (224 aa)) adopt a coiled-coil conformation. S152 and S239 each carry phosphoserine.

Belongs to the CCDC69 family.

It localises to the cytoplasm. The protein localises to the cytoskeleton. Its subcellular location is the spindle. The protein resides in the midbody. May act as a scaffold to regulate the recruitment and assembly of spindle midzone components. Required for the localization of AURKB and PLK1 to the spindle midzone. In Bos taurus (Bovine), this protein is Coiled-coil domain-containing protein 69 (CCDC69).